Here is a 387-residue protein sequence, read N- to C-terminus: WD repeat-containing protein 89 (387 aa).

WD repeat units follow at residues 21 to 65, 68 to 107, 112 to 156, 168 to 208, 214 to 254, and 319 to 358; these read KEPT…VLRE, GYPGLLNGVRFANSCDSVYSACTDGTVKCWDARVAREKPV, GYPS…QNLS, THSD…EEDA, NSIS…TDEP, and GHAATVRSFCWNVQDDSLLTGGEDAQLLLWKPGAIEKTFT.

The polypeptide is WD repeat-containing protein 89 (WDR89) (Homo sapiens (Human)).